Here is a 479-residue protein sequence, read N- to C-terminus: Protein phosphatase 1B (479 aa).

Residues 1-14 (MGAFLDKPKTEKHN) are compositionally biased toward basic and acidic residues. The tract at residues 1-20 (MGAFLDKPKTEKHNAHGAGN) is disordered. A lipid anchor (N-myristoyl glycine) is attached at Gly-2. A Glycyl lysine isopeptide (Lys-Gly) (interchain with G-Cter in ISG15) cross-link involves residue Lys-12. In terms of domain architecture, PPM-type phosphatase spans 23–295 (RYGLSSMQGW…DNMSIVLVCF (273 aa)). Mn(2+) is bound by residues Asp-60 and Gly-61. Residue Lys-142 forms a Glycyl lysine isopeptide (Lys-Gly) (interchain with G-Cter in ISG15) linkage. Asp-243 and Asp-286 together coordinate Mn(2+). Ser-386 bears the Phosphoserine mark. A disordered region spans residues 423-479 (VEGEESPAEPAATATSSNSDAGNPVTMQESHTESESGLAELDSSNEDAGTKMSGEKI). Over residues 430 to 439 (AEPAATATSS) the composition is skewed to low complexity. The segment covering 440–451 (NSDAGNPVTMQE) has biased composition (polar residues).

Belongs to the PP2C family. Monomer. Interacts with PAK6. Interacts with the phosphorylated form of IKBKB/IKKB. Mg(2+) is required as a cofactor. The cofactor is Mn(2+). In terms of processing, isgylation negatively regulates its activity. N-myristoylation is essential for the recognition of its substrates for dephosphorylation. Highly expressed in heart and skeletal muscle.

It localises to the cytoplasm. It is found in the cytosol. Its subcellular location is the membrane. It catalyses the reaction O-phospho-L-seryl-[protein] + H2O = L-seryl-[protein] + phosphate. The catalysed reaction is O-phospho-L-threonyl-[protein] + H2O = L-threonyl-[protein] + phosphate. Its function is as follows. Enzyme with a broad specificity. Dephosphorylates CDK2 and CDK6 in vitro. Dephosphorylates PRKAA1 and PRKAA2. Inhibits TBK1-mediated antiviral signaling by dephosphorylating it at 'Ser-172'. Plays an important role in the termination of TNF-alpha-mediated NF-kappa-B activation through dephosphorylating and inactivating IKBKB/IKKB. The polypeptide is Protein phosphatase 1B (PPM1B) (Homo sapiens (Human)).